The primary structure comprises 318 residues: Tyrosine recombinase XerC (318 aa).

The Core-binding (CB) domain maps to 17–108; the sequence is PEVMAERRRW…GLRSFLRYLE (92 aa). Positions 129-312 constitute a Tyr recombinase domain; it reads SLPKALTDRE…DSARLLEIYD (184 aa). Residues arginine 172, lysine 196, histidine 264, arginine 267, and histidine 290 contribute to the active site. Tyrosine 299 acts as the O-(3'-phospho-DNA)-tyrosine intermediate in catalysis.

The protein belongs to the 'phage' integrase family. XerC subfamily. As to quaternary structure, forms a cyclic heterotetrameric complex composed of two molecules of XerC and two molecules of XerD.

The protein resides in the cytoplasm. Functionally, site-specific tyrosine recombinase, which acts by catalyzing the cutting and rejoining of the recombining DNA molecules. The XerC-XerD complex is essential to convert dimers of the bacterial chromosome into monomers to permit their segregation at cell division. It also contributes to the segregational stability of plasmids. In Rhizobium meliloti (strain 1021) (Ensifer meliloti), this protein is Tyrosine recombinase XerC.